The following is a 96-amino-acid chain: MKVTDVKIRKINGESRLRGVASIAFDDCFVVNDIRIIEGEKGIFIAMPSRKTTKGTFRDIAHPVNTETRQVIEESILTKYQDVLNNPVEDKPEQEN.

The protein belongs to the SpoVG family.

In terms of biological role, could be involved in septation. In Phytoplasma australiense, this protein is Putative septation protein SpoVG.